The following is a 149-amino-acid chain: 3-dehydroquinate dehydratase 2 (149 aa).

Tyr24 (proton acceptor) is an active-site residue. Substrate contacts are provided by Asn75, His81, and Asp88. Residue His101 is the Proton donor of the active site. Substrate is bound by residues 102 to 103 (LS) and Arg112.

The protein belongs to the type-II 3-dehydroquinase family. In terms of assembly, homododecamer.

The catalysed reaction is 3-dehydroquinate = 3-dehydroshikimate + H2O. It participates in metabolic intermediate biosynthesis; chorismate biosynthesis; chorismate from D-erythrose 4-phosphate and phosphoenolpyruvate: step 3/7. Catalyzes a trans-dehydration via an enolate intermediate. The chain is 3-dehydroquinate dehydratase 2 (aroQ2) from Pseudomonas putida (strain ATCC 47054 / DSM 6125 / CFBP 8728 / NCIMB 11950 / KT2440).